The chain runs to 207 residues: Guanylate kinase (207 aa).

One can recognise a Guanylate kinase-like domain in the interval 4 to 184 (GTLYIVSAPS…ALSDLKTIIR (181 aa)). Position 11-18 (11-18 (APSGAGKS)) interacts with ATP.

The protein belongs to the guanylate kinase family.

Its subcellular location is the cytoplasm. It carries out the reaction GMP + ATP = GDP + ADP. The enzyme catalyses dZMP + ATP = dZDP + ADP. It participates in purine metabolism. Its function is as follows. Essential for recycling GMP and indirectly, cGMP. Functionally, (Microbial infection) Catalyzes the phosphorylation of dZMP to dZDP, when the bacterium is infected by a phage that produces the substrate for the synthesis of dZTP (2- amino-2'-deoxyadenosine 5'-triphosphate), which is then used by the phage as a DNA polymerase substrate. The chain is Guanylate kinase from Salmonella choleraesuis (strain SC-B67).